A 542-amino-acid chain; its full sequence is Excitatory amino acid transporter 1 (542 aa).

At 1-47 (MTKSNGEEARLGGRMERFQQGVRKRTLLAKKKVQNITKEDVKSYLFR) the chain is on the cytoplasmic side. A helical transmembrane segment spans residues 48 to 68 (NAFVLLTVTAVIVGTILGFTL). The Extracellular portion of the chain corresponds to 69–86 (RPYRMSYREVKYFSFPGE). The helical transmembrane segment at 87-108 (LLMRMLQMLVLPLIISSLVTGM) threads the bilayer. The Cytoplasmic segment spans residues 109–122 (AALDSKASGKMGMR). The chain crosses the membrane as a helical span at residues 123 to 145 (AVVYYMTTTIIAVVIGIIIVIII). Topologically, residues 146–236 (HPGKGTKENM…ITEELVPVPG (91 aa)) are extracellular. Residues 237-260 (SVNGVNALGLVVFSMCFGFVIGNM) form a helical membrane-spanning segment. At 261–269 (KEQGQALRE) the chain is on the cytoplasmic side. A helical transmembrane segment spans residues 270 to 297 (FFDSLNEAIMRLVAVIMWYAPLGILFLI). Residues 298–318 (AGKIVEMEDMGVIGGQLAMYT) are Extracellular-facing. The chain crosses the membrane as a helical span at residues 319 to 340 (VTVIVGLLIHAVIVLPLLYFLV). The Cytoplasmic segment spans residues 341–345 (TRKNP). Positions 346–376 (WVFIGGLLQALITALGTSSSSATLPITFKCL) form an intramembrane region, discontinuously helical. L-aspartate is bound at residue 363 to 365 (SSS). Topologically, residues 377-385 (EENNGVDKR) are cytoplasmic. A helical membrane pass occupies residues 386–412 (VTRFVLPVGATINMDGTALYEALAAIF). Na(+)-binding residues include G394, T396, and N398. Residue T402 participates in L-aspartate binding. Residues 413–425 (IAQVNNFELNFGQ) are Extracellular-facing. Positions 426–459 (IITISITATAASIGAAGIPQAGLVTMVIVLTSVG) form an intramembrane region, discontinuously helical. L-aspartate is bound at residue 443–447 (IPQAG). Topologically, residues 460–472 (LPTDDITLIIAVD) are extracellular. A helical transmembrane segment spans residues 473–494 (WFLDRLRTTTNVLGDSLGAGIV). L-aspartate contacts are provided by D476 and N483. Residues N483 and D487 each contribute to the Na(+) site. The Cytoplasmic segment spans residues 495 to 542 (EHLSRHELKNRDVEMGNSVIEENEMKKPYQLISQESEIEKSMDSETKM). S512 bears the Phosphoserine mark.

The protein belongs to the dicarboxylate/amino acid:cation symporter (DAACS) (TC 2.A.23) family. SLC1A3 subfamily. Homotrimer. Post-translationally, glycosylated.

It localises to the cell membrane. It carries out the reaction K(+)(in) + L-glutamate(out) + 3 Na(+)(out) + H(+)(out) = K(+)(out) + L-glutamate(in) + 3 Na(+)(in) + H(+)(in). The catalysed reaction is K(+)(in) + L-aspartate(out) + 3 Na(+)(out) + H(+)(out) = K(+)(out) + L-aspartate(in) + 3 Na(+)(in) + H(+)(in). It catalyses the reaction D-aspartate(out) + K(+)(in) + 3 Na(+)(out) + H(+)(out) = D-aspartate(in) + K(+)(out) + 3 Na(+)(in) + H(+)(in). Functionally, sodium-dependent, high-affinity amino acid transporter that mediates the uptake of L-glutamate and also L-aspartate and D-aspartate. Functions as a symporter that transports one amino acid molecule together with two or three Na(+) ions and one proton, in parallel with the counter-transport of one K(+) ion. Plays a redundant role in the rapid removal of released glutamate from the synaptic cleft, which is essential for terminating the postsynaptic action of glutamate. This chain is Excitatory amino acid transporter 1 (SLC1A3), found in Bos taurus (Bovine).